Reading from the N-terminus, the 633-residue chain is Threonine--tRNA ligase (633 aa).

The TGS domain maps to 1-59 (MIRITFSAEQKVKEYSGKVTGFDILQPDVLKEAIAFKVNGELHDLSREIEADAEIEVIQ). Positions 240-532 (DHRKIAKDMD…LIENYAGKFP (293 aa)) are catalytic. Residues cysteine 332, histidine 383, and histidine 509 each contribute to the Zn(2+) site.

This sequence belongs to the class-II aminoacyl-tRNA synthetase family. Homodimer. Zn(2+) is required as a cofactor.

It is found in the cytoplasm. The catalysed reaction is tRNA(Thr) + L-threonine + ATP = L-threonyl-tRNA(Thr) + AMP + diphosphate + H(+). Catalyzes the attachment of threonine to tRNA(Thr) in a two-step reaction: L-threonine is first activated by ATP to form Thr-AMP and then transferred to the acceptor end of tRNA(Thr). Also edits incorrectly charged L-seryl-tRNA(Thr). This is Threonine--tRNA ligase from Wolbachia sp. subsp. Drosophila simulans (strain wRi).